Here is a 102-residue protein sequence, read N- to C-terminus: Iron-sulfur cluster assembly protein CyaY (102 aa).

This sequence belongs to the frataxin family.

Functionally, involved in iron-sulfur (Fe-S) cluster assembly. May act as a regulator of Fe-S biogenesis. In Histophilus somni (strain 129Pt) (Haemophilus somnus), this protein is Iron-sulfur cluster assembly protein CyaY.